The chain runs to 336 residues: Apyrase (336 aa).

The first 21 residues, 1-21, serve as a signal peptide directing secretion; the sequence is MFLKFCVVAFAICLSINLSEG. The N-linked (GlcNAc...) asparagine glycan is linked to Asn209.

Belongs to the apyrase family. Ca(2+) is required as a cofactor. Salivary gland (at protein level).

It is found in the secreted. It catalyses the reaction a ribonucleoside 5'-triphosphate + 2 H2O = a ribonucleoside 5'-phosphate + 2 phosphate + 2 H(+). Functionally, facilitates hematophagy by inhibiting ADP- and collagen-dependent platelet aggregation in the host. Cleaves adenosine triphosphate (ATP) and adenosine diphosphate (ADP) to adenosine monophosphate (AMP) and inorganic phosphate in calcium-dependent manner. This Phlebotomus duboscqi (Sandfly) protein is Apyrase.